Consider the following 709-residue polypeptide: Pentatricopeptide repeat-containing protein At5g42310, chloroplastic (709 aa).

The N-terminal 54 residues, 1–54 (MLLLQQPPLVSTRFHSLYFLTHHHHHHHRFFQPPISAFSATTSASLPSPSPSSS), are a transit peptide targeting the chloroplast. 14 PPR repeats span residues 196–230 (TPLTYNALIGACARNNDIEKALNLIAKMRQDGYQS), 231–267 (DFVNYSLVIQSLTRSNKIDSVMLLRLYKEIERDKLEL), 268–302 (DVQLVNDIIMGFAKSGDPSKALQLLGMAQATGLSA), 303–337 (KTATLVSIISALADSGRTLEAEALFEELRQSGIKP), 338–372 (RTRAYNALLKGYVKTGPLKDAESMVSEMEKRGVSP), 373–407 (DEHTYSLLIDAYVNAGRWESARIVLKEMEAGDVQP), 408–442 (NSFVFSRLLAGFRDRGEWQKTFQVLKEMKSIGVKP), 443–477 (DRQFYNVVIDTFGKFNCLDHAMTTFDRMLSEGIEP), 478–512 (DRVTWNTLIDCHCKHGRHIVAEEMFEAMERRGCLP), 513–547 (CATTYNIMINSYGDQERWDDMKRLLGKMKSQGILP), 548–582 (NVVTHTTLVDVYGKSGRFNDAIECLEEMKSVGLKP), 583–617 (SSTMYNALINAYAQRGLSEQAVNAFRVMTSDGLKP), 618–652 (SLLALNSLINAFGEDRRDAEAFAVLQYMKENGVKP), and 653–687 (DVVTYTTLMKALIRVDKFQKVPVVYEEMIMSGCKP).

Belongs to the PPR family. P subfamily. As to quaternary structure, interacts with PDE338.

It localises to the plastid. Its subcellular location is the chloroplast stroma. It is found in the chloroplast thylakoid. The protein localises to the chloroplast. Required for chloroplast protein synthesis and accumulation of subunits of the thylakoid protein complexes. Activates psaC and petA translation by binding their 5'-UTRs. Required for the correct processing of petB and petD mRNAs. Interacts with the petB and petD intergenic region and is required for the generation of petB and petD monocistronic RNAs. The chain is Pentatricopeptide repeat-containing protein At5g42310, chloroplastic from Arabidopsis thaliana (Mouse-ear cress).